A 291-amino-acid polypeptide reads, in one-letter code: Homoserine kinase (291 aa).

Residue 80–90 participates in ATP binding; the sequence is RPASGLGSSAA.

It belongs to the GHMP kinase family. Homoserine kinase subfamily.

It localises to the cytoplasm. It carries out the reaction L-homoserine + ATP = O-phospho-L-homoserine + ADP + H(+). Its pathway is amino-acid biosynthesis; L-threonine biosynthesis; L-threonine from L-aspartate: step 4/5. Its function is as follows. Catalyzes the ATP-dependent phosphorylation of L-homoserine to L-homoserine phosphate. This Haloarcula marismortui (strain ATCC 43049 / DSM 3752 / JCM 8966 / VKM B-1809) (Halobacterium marismortui) protein is Homoserine kinase.